A 200-amino-acid chain; its full sequence is LHFPL tetraspan subfamily member 6 protein (200 aa).

A signal peptide spans 1–23 (MASSLTCTGVIWALLSFLSAATS). 3 helical membrane-spanning segments follow: residues 84–104 (ICTI…LTAL), 123–143 (GIQF…PLGW), and 166–186 (IGWA…LCTW).

It belongs to the LHFP family.

It localises to the membrane. The protein is LHFPL tetraspan subfamily member 6 protein of Mus musculus (Mouse).